Consider the following 569-residue polypeptide: Sulfite reductase [NADPH] hemoprotein beta-component (569 aa).

The [4Fe-4S] cluster site is built by C434, C440, C479, and C483. Position 483 (C483) interacts with siroheme.

It belongs to the nitrite and sulfite reductase 4Fe-4S domain family. As to quaternary structure, alpha(8)-beta(8). The alpha component is a flavoprotein, the beta component is a hemoprotein. It depends on siroheme as a cofactor. Requires [4Fe-4S] cluster as cofactor.

It catalyses the reaction hydrogen sulfide + 3 NADP(+) + 3 H2O = sulfite + 3 NADPH + 4 H(+). It participates in sulfur metabolism; hydrogen sulfide biosynthesis; hydrogen sulfide from sulfite (NADPH route): step 1/1. In terms of biological role, component of the sulfite reductase complex that catalyzes the 6-electron reduction of sulfite to sulfide. This is one of several activities required for the biosynthesis of L-cysteine from sulfate. This chain is Sulfite reductase [NADPH] hemoprotein beta-component, found in Staphylococcus saprophyticus subsp. saprophyticus (strain ATCC 15305 / DSM 20229 / NCIMB 8711 / NCTC 7292 / S-41).